The sequence spans 520 residues: Glutamyl-tRNA(Gln) amidotransferase subunit A (520 aa).

Active-site charge relay system residues include lysine 80 and serine 155. Residue serine 179 is the Acyl-ester intermediate of the active site.

Belongs to the amidase family. GatA subfamily. As to quaternary structure, heterotrimer of A, B and C subunits.

The enzyme catalyses L-glutamyl-tRNA(Gln) + L-glutamine + ATP + H2O = L-glutaminyl-tRNA(Gln) + L-glutamate + ADP + phosphate + H(+). Its function is as follows. Allows the formation of correctly charged Gln-tRNA(Gln) through the transamidation of misacylated Glu-tRNA(Gln) in organisms which lack glutaminyl-tRNA synthetase. The reaction takes place in the presence of glutamine and ATP through an activated gamma-phospho-Glu-tRNA(Gln). In Renibacterium salmoninarum (strain ATCC 33209 / DSM 20767 / JCM 11484 / NBRC 15589 / NCIMB 2235), this protein is Glutamyl-tRNA(Gln) amidotransferase subunit A.